The chain runs to 281 residues: Leukocyte antigen CD37 (281 aa).

At 1 to 17 (MSAQESCLSLIKYFLFV) the chain is on the cytoplasmic side. Residues 18 to 38 (FNLFFFVLGGLIFCFGTWILI) form a helical membrane-spanning segment. At 39–59 (DKTSFVSFVGLSFVPLQTWSK) the chain is on the extracellular side. Residues 60–74 (VLAVSGVLTMALALL) form a helical membrane-spanning segment. Residues 75-85 (GCVGALKELRC) are Cytoplasmic-facing. Residues 86 to 111 (LLGLYFGMLLLLFATQITLGILISTQ) form a helical membrane-spanning segment. The Extracellular portion of the chain corresponds to 112–241 (RVRLERRVQE…QSLQKWLHNN (130 aa)). Residues N170, N183, and N188 are each glycosylated (N-linked (GlcNAc...) asparagine). A helical membrane pass occupies residues 242 to 266 (IISIVGICLGVGLLELGFMTLSIFL). Residues 267-281 (CRNLDHVYDRLARYR) lie on the Cytoplasmic side of the membrane.

It belongs to the tetraspanin (TM4SF) family. As to quaternary structure, interacts with SCIMP. Interacts with SOCS3. Interacts with DECTIN1/CLEC7A. Post-translationally, tyrosine phosphorylated; leading to activation of downstream signaling pathways.

The protein resides in the cell membrane. In terms of biological role, structural component of specialized membrane microdomains known as tetraspanin-enriched microdomains (TERMs), which act as platforms for receptor clustering and signaling. Participates thereby in diverse biological functions such as cell signal transduction, adhesion, migration and protein trafficking. Upon ligand binding, two signaling pathways are activated, one acting through phosphorylation by LYN leading to cell death or a survival pathway with activation of GSK3B. Plays an essential role for clustering of integrin ITGA4/ITGB1 and promotes its mobility in the plasma membrane of B-cells. In turn, participates in ITGA4/ITGB1 integrin-mediated antiapoptotic signaling through AKT. Also plays a role in the migration of dendritic cells and neutrophils to draining lymph nodes, as well as in their integrin-mediated adhesion. Negatively regulates IL-6 responses through direct interaction with SOCS3 thereby preventing constitutive IL-6 signaling. Alternatively, inhibition of IL-6 signaling can also occur via interaction and stabilization of DECTIN1/CLEC7A at the cell membrane to inhibit its ability to promote the production of IL-6. The sequence is that of Leukocyte antigen CD37 (Cd37) from Mus musculus (Mouse).